We begin with the raw amino-acid sequence, 303 residues long: N-acetyl-D-glucosamine kinase (303 aa).

ATP contacts are provided by residues 4-11 and 133-140; these read GFDVGGTK and GFGGGLIF. Residues His-157, Cys-177, Cys-179, and Cys-184 each contribute to the Zn(2+) site.

It belongs to the ROK (NagC/XylR) family. NagK subfamily.

The enzyme catalyses N-acetyl-D-glucosamine + ATP = N-acetyl-D-glucosamine 6-phosphate + ADP + H(+). The protein operates within cell wall biogenesis; peptidoglycan recycling. Its function is as follows. Catalyzes the phosphorylation of N-acetyl-D-glucosamine (GlcNAc) derived from cell-wall degradation, yielding GlcNAc-6-P. The sequence is that of N-acetyl-D-glucosamine kinase from Aliivibrio fischeri (strain ATCC 700601 / ES114) (Vibrio fischeri).